Reading from the N-terminus, the 291-residue chain is Tyrosine recombinase XerD (291 aa).

Positions 1–82 (MEEGLIDRLL…ACKRLYIWME (82 aa)) constitute a Core-binding (CB) domain. Residues 103-285 (NIPTLITEQQ…ANVWLQGVVK (183 aa)) form the Tyr recombinase domain. Residues Arg-143, Lys-167, His-237, Arg-240, and His-263 contribute to the active site. The active-site O-(3'-phospho-DNA)-tyrosine intermediate is Tyr-272.

This sequence belongs to the 'phage' integrase family. XerD subfamily. Forms a cyclic heterotetrameric complex composed of two molecules of XerC and two molecules of XerD.

Its subcellular location is the cytoplasm. Its function is as follows. Site-specific tyrosine recombinase, which acts by catalyzing the cutting and rejoining of the recombining DNA molecules. The XerC-XerD complex is essential to convert dimers of the bacterial chromosome into monomers to permit their segregation at cell division. It also contributes to the segregational stability of plasmids. The sequence is that of Tyrosine recombinase XerD from Neisseria meningitidis serogroup A / serotype 4A (strain DSM 15465 / Z2491).